The primary structure comprises 103 residues: Small ribosomal subunit protein bS6c (103 aa).

It belongs to the bacterial ribosomal protein bS6 family.

It localises to the plastid. It is found in the chloroplast. In terms of biological role, binds together with bS18 to 16S ribosomal RNA. This Cyanidium caldarium (Red alga) protein is Small ribosomal subunit protein bS6c (rps6).